A 219-amino-acid polypeptide reads, in one-letter code: 7-cyano-7-deazaguanine synthase (219 aa).

An ATP-binding site is contributed by 10 to 20 (FSGGQDSTTCL). Zn(2+)-binding residues include cysteine 186, cysteine 195, cysteine 198, and cysteine 201.

This sequence belongs to the QueC family. As to quaternary structure, homodimer. Zn(2+) serves as cofactor.

It carries out the reaction 7-carboxy-7-deazaguanine + NH4(+) + ATP = 7-cyano-7-deazaguanine + ADP + phosphate + H2O + H(+). It participates in purine metabolism; 7-cyano-7-deazaguanine biosynthesis. Functionally, catalyzes the ATP-dependent conversion of 7-carboxy-7-deazaguanine (CDG) to 7-cyano-7-deazaguanine (preQ(0)). The chain is 7-cyano-7-deazaguanine synthase from Bacillus licheniformis (strain ATCC 14580 / DSM 13 / JCM 2505 / CCUG 7422 / NBRC 12200 / NCIMB 9375 / NCTC 10341 / NRRL NRS-1264 / Gibson 46).